Here is a 540-residue protein sequence, read N- to C-terminus: IQ motif and ankyrin repeat domain-containing protein 1 (540 aa).

Residues 1 to 17 (MSTKKGGPKAASGKGQA) are compositionally biased toward low complexity. The interval 1–62 (MSTKKGGPKA…PQAPAAPTAE (62 aa)) is disordered. The IQ domain maps to 62 to 91 (EDKAAIVIQCAFRQYLARRELARRCQERQE). ANK repeat units follow at residues 191 to 220 (HGNTPLSEAAAGGQTMAIQLLAELGANPNT) and 224 to 253 (FGRTPLYRAAFGGHLEAVEELLKIGADPRM). Residues 281 to 388 (LTEAMLKNME…EETLAMARLE (108 aa)) adopt a coiled-coil conformation.

This chain is IQ motif and ankyrin repeat domain-containing protein 1, found in Mus musculus (Mouse).